The primary structure comprises 156 residues: Transcription elongation factor GreA (156 aa).

A coiled-coil region spans residues 1–32; that stretch reads MKKVRLTREGYEKLKQELEELKRKFMYEISER.

The protein belongs to the GreA/GreB family.

Functionally, necessary for efficient RNA polymerase transcription elongation past template-encoded arresting sites. The arresting sites in DNA have the property of trapping a certain fraction of elongating RNA polymerases that pass through, resulting in locked ternary complexes. Cleavage of the nascent transcript by cleavage factors such as GreA or GreB allows the resumption of elongation from the new 3'terminus. GreA releases sequences of 2 to 3 nucleotides. This is Transcription elongation factor GreA from Thermotoga neapolitana (strain ATCC 49049 / DSM 4359 / NBRC 107923 / NS-E).